The chain runs to 226 residues: ATP synthase F(0) complex subunit a (226 aa).

Transmembrane regions (helical) follow at residues 9-29 (FITPMMLGLPLVTLIILFPSL), 68-88 (WTLMLMSLILFIGSTNLLGLL), 97-117 (QLSMNLGMAIPLWAGAVITGF), 138-158 (IPMLVIIETISLFIQPMALAV), and 184-204 (ISPTTALITFIILILLTILEF).

This sequence belongs to the ATPase A chain family. As to quaternary structure, component of the ATP synthase complex composed at least of ATP5F1A/subunit alpha, ATP5F1B/subunit beta, ATP5MC1/subunit c (homooctomer), MT-ATP6/subunit a, MT-ATP8/subunit 8, ATP5ME/subunit e, ATP5MF/subunit f, ATP5MG/subunit g, ATP5MK/subunit k, ATP5MJ/subunit j, ATP5F1C/subunit gamma, ATP5F1D/subunit delta, ATP5F1E/subunit epsilon, ATP5PF/subunit F6, ATP5PB/subunit b, ATP5PD/subunit d, ATP5PO/subunit OSCP. ATP synthase complex consists of a soluble F(1) head domain (subunits alpha(3) and beta(3)) - the catalytic core - and a membrane F(0) domain - the membrane proton channel (subunits c, a, 8, e, f, g, k and j). These two domains are linked by a central stalk (subunits gamma, delta, and epsilon) rotating inside the F1 region and a stationary peripheral stalk (subunits F6, b, d, and OSCP). Interacts with DNAJC30; interaction is direct.

It is found in the mitochondrion inner membrane. The catalysed reaction is H(+)(in) = H(+)(out). Its function is as follows. Subunit a, of the mitochondrial membrane ATP synthase complex (F(1)F(0) ATP synthase or Complex V) that produces ATP from ADP in the presence of a proton gradient across the membrane which is generated by electron transport complexes of the respiratory chain. ATP synthase complex consist of a soluble F(1) head domain - the catalytic core - and a membrane F(1) domain - the membrane proton channel. These two domains are linked by a central stalk rotating inside the F(1) region and a stationary peripheral stalk. During catalysis, ATP synthesis in the catalytic domain of F(1) is coupled via a rotary mechanism of the central stalk subunits to proton translocation. With the subunit c (ATP5MC1), forms the proton-conducting channel in the F(0) domain, that contains two crucial half-channels (inlet and outlet) that facilitate proton movement from the mitochondrial intermembrane space (IMS) into the matrix. Protons are taken up via the inlet half-channel and released through the outlet half-channel, following a Grotthuss mechanism. The sequence is that of ATP synthase F(0) complex subunit a from Capra hircus (Goat).